Here is a 277-residue protein sequence, read N- to C-terminus: MKFIFAFVLCLAVAQTALGAIIGHDKVQPFAQPDPVTISEKAAVKYKPQLVIFDSCVSFPAVNAAGDITGGLKGTSGTDACTKAPLGSQVYGRSTWYQGKWAMMFAWYFPKNFWNLESRSRHLWANMVLWLDNPALETPTILGASLSRQTLEVPKWLFIPSGVQQKNSYSKATPIPPMGFVGTQQIRTARIGRFQYTYNYTGGSTISTRVSQSYPDTSGWVGLDFTYLDGQYQDLIMWNQLTDQARAALESADFGRDTKVPFNDKNFEAALAQAWPF.

Positions 1-19 are cleaved as a signal peptide; sequence MKFIFAFVLCLAVAQTALG. A Hepta-peptide GHRHDWE motif motif is present at residues 119 to 125; the sequence is RSRHLWA. Asn199 is a glycosylation site (N-linked (GlcNAc...) asparagine).

Belongs to the Necrosis inducing protein (NPP1) family.

It is found in the secreted. Its function is as follows. Secreted effector that contributes strongly to virulence during infection by P.capsici. This Phytophthora capsici protein is NLP effector protein Pc109095.